We begin with the raw amino-acid sequence, 180 residues long: Shikimate kinase (180 aa).

14–19 contacts ATP; sequence GAGKST. Position 18 (Ser-18) interacts with Mg(2+). Substrate is bound by residues Asp-36, Arg-60, and Gly-82. Residue Arg-120 coordinates ATP. Arg-140 lines the substrate pocket. Position 157 (Gln-157) interacts with ATP.

Belongs to the shikimate kinase family. As to quaternary structure, monomer. Mg(2+) is required as a cofactor.

Its subcellular location is the cytoplasm. It catalyses the reaction shikimate + ATP = 3-phosphoshikimate + ADP + H(+). Its pathway is metabolic intermediate biosynthesis; chorismate biosynthesis; chorismate from D-erythrose 4-phosphate and phosphoenolpyruvate: step 5/7. Its function is as follows. Catalyzes the specific phosphorylation of the 3-hydroxyl group of shikimic acid using ATP as a cosubstrate. This Haemophilus influenzae (strain PittGG) protein is Shikimate kinase.